Consider the following 581-residue polypeptide: Jasmonoyl--L-amino acid synthetase GH3.5 (581 aa).

Serine 92 provides a ligand contact to ATP. Serine 95 lines the jasmonate pocket. Residues threonine 115, asparagine 161, and 324–329 (GASEGW) each bind ATP. 159–163 (TTNLY) contributes to the an L-alpha-amino acid binding site. Residues 321-324 (ADYG) and serine 326 contribute to the jasmonate site. An an L-alpha-amino acid-binding site is contributed by 534 to 538 (EILDH). Residue lysine 561 participates in ATP binding.

This sequence belongs to the IAA-amido conjugating enzyme family. Expressed in green shoots, roots and flowers.

It catalyses the reaction a jasmonate + an L-alpha-amino acid + ATP = a jasmonyl-L-amino acid + AMP + diphosphate + H(+). Its function is as follows. Catalyzes the synthesis of jasmonate-amino acid conjugates by adenylation. Catalyzes the conjugation of jasmonate (JA) to Ile when expressed in a heterologous system (E.coli). Catalyzes in vitro the conjugation of jasmonate (JA) to Ile, Phe, Cys, Leu, Met, Ala, Val and Trp. Involved in the production of JA-Ile in response to infection by the rice blast fungus Magnaporthe oryzae. Required for the accumulation of the flavonoid phytoalexin sakuranetin in response to infection by the rice blast fungus. Involved in herbivory-induced JA-Ile accumulation. Involved in the production of JA-Ile in response to wounding. Required for modulation of light and JA signaling in photomorphogenesis. Required for normal seed development. Required for optimal flower opening and closing and anther dehiscence. May catalyze the synthesis of indole-3-acetic acid (IAA)-amino acid conjugates, providing a mechanism for the plant to cope with the presence of excess auxin. The sequence is that of Jasmonoyl--L-amino acid synthetase GH3.5 from Oryza sativa subsp. japonica (Rice).